The sequence spans 518 residues: Organic cation/carnitine transporter 3 (518 aa).

Positions Met1 to Arg23 are disordered. The Cytoplasmic portion of the chain corresponds to Met1 to Cys32. A helical transmembrane segment spans residues Ile33–Phe53. Over Asp54–Gly122 the chain is Extracellular. 2 N-linked (GlcNAc...) asparagine glycosylation sites follow: Asn83 and Asn94. A helical membrane pass occupies residues Phe123–Ala143. At Asp144–Cys157 the chain is on the cytoplasmic side. The helical transmembrane segment at Leu158–Phe178 threads the bilayer. Over Leu179–Arg180 the chain is Extracellular. Residues Phe181–Leu197 form a helical membrane-spanning segment. Position 198 to 205 (Ser198 to Lys205) interacts with ATP. Topologically, residues Ser198–Val210 are cytoplasmic. A helical membrane pass occupies residues Gly211–Ile231. At Asn232–Asn239 the chain is on the extracellular side. Residues Leu240 to Val259 traverse the membrane as a helical segment. The Cytoplasmic portion of the chain corresponds to Arg260–Arg325. Residues Leu326 to Ala346 traverse the membrane as a helical segment. Over Leu347–Tyr355 the chain is Extracellular. A helical membrane pass occupies residues Leu356–Ile376. At Asp377 to Asp383 the chain is on the cytoplasmic side. A helical transmembrane segment spans residues Ala384–Gln404. Over Gln405–Gln410 the chain is Extracellular. Residues Ile411–Tyr431 traverse the membrane as a helical segment. Over Thr432–Ser443 the chain is Cytoplasmic. Residues Ala444–Ala464 form a helical membrane-spanning segment. Topologically, residues Ala465–Gln470 are extracellular. A helical membrane pass occupies residues Phe471 to Leu491. At Pro492–Gly518 the chain is on the cytoplasmic side.

It belongs to the major facilitator (TC 2.A.1) superfamily. Organic cation transporter (TC 2.A.1.19) family. In terms of tissue distribution, mostly expressed in siliques, mainly in young seeds. Present in stems (cortical cells and parenchyma cells), at the basis of secondary inflorescences, and at the base of trichomes.

Its subcellular location is the vacuole membrane. High affinity carnitine transporter involved in the active cellular uptake of carnitine. Also transports organic cations. The polypeptide is Organic cation/carnitine transporter 3 (OCT3) (Arabidopsis thaliana (Mouse-ear cress)).